A 265-amino-acid polypeptide reads, in one-letter code: HUWE1-associated protein modifying stress responses (265 aa).

Disordered stretches follow at residues 1-22, 145-170, 195-218, and 240-265; these read MEDKKEEGESEIQEHGPEHWFS, RNSRAPPRLTVVSPNRATPTETGSSV, VRSSTPGSPTHVSGSSNTGRRRNG, and GTRKRSSAQCGDVITDSPTHKRNRMI. 2 stretches are compositionally biased toward polar residues: residues 156-170 and 195-212; these read VSPNRATPTETGSSV and VRSSTPGSPTHVSGSSNT.

This sequence belongs to the TAPR1 family. Oligomer.

It localises to the nucleus. It is found in the cytoplasm. In terms of biological role, acts as a central player within a network of stress response pathways promoting cellular adaptability. Functions as a negative regulator of TP53/P53 in the cellular response to telomere erosion and probably also DNA damage. This Xenopus laevis (African clawed frog) protein is HUWE1-associated protein modifying stress responses.